The sequence spans 350 residues: MDINLFDFHLPEELIAQVPLEDRETSRLMVLDRETGDIEHKHFTDILSYLHEGDCLVLNETKVMPARLHGVKEDTGAHIEVLLLKQEEGDKWETLVKPAKRVKEGTVISFGEGKLKATCTGTADQGGRQLEFSYDGIFYEILDELGEMPLPPYIKETLEDRDRYQTVYAKEIGSAAAPTAGLHFTEELLEKLKQKGVQLAFITLHVGLGTFRPVSADTIEEHHMHAEYYHMSEETAALLNRVKENGGRIITVGTTSTRTLETIATDHDGKLCAASGWTDIFMYPGYEFKAIDGLITNFHLPKSTLIMLVSAFANRDNVLHAYNEAVKEKYRFFSFGDAMFVASHAKMRNK.

It belongs to the QueA family. In terms of assembly, monomer.

It is found in the cytoplasm. It carries out the reaction 7-aminomethyl-7-carbaguanosine(34) in tRNA + S-adenosyl-L-methionine = epoxyqueuosine(34) in tRNA + adenine + L-methionine + 2 H(+). Its pathway is tRNA modification; tRNA-queuosine biosynthesis. Its function is as follows. Transfers and isomerizes the ribose moiety from AdoMet to the 7-aminomethyl group of 7-deazaguanine (preQ1-tRNA) to give epoxyqueuosine (oQ-tRNA). The protein is S-adenosylmethionine:tRNA ribosyltransferase-isomerase of Bacillus cereus (strain B4264).